The chain runs to 453 residues: Tol-Pal system protein TolB (453 aa).

The N-terminal stretch at 1 to 34 (MYLIIKKTHKLPHWLQKVSLSIMLIIFLWKPALL) is a signal peptide.

The protein belongs to the TolB family. The Tol-Pal system is composed of five core proteins: the inner membrane proteins TolA, TolQ and TolR, the periplasmic protein TolB and the outer membrane protein Pal. They form a network linking the inner and outer membranes and the peptidoglycan layer.

Its subcellular location is the periplasm. Functionally, part of the Tol-Pal system, which plays a role in outer membrane invagination during cell division and is important for maintaining outer membrane integrity. TolB occupies a key intermediary position in the Tol-Pal system because it communicates directly with both membrane-embedded components, Pal in the outer membrane and TolA in the inner membrane. The polypeptide is Tol-Pal system protein TolB (Blochmanniella pennsylvanica (strain BPEN)).